A 183-amino-acid chain; its full sequence is ATP-dependent protease subunit HslV (183 aa).

Residue threonine 9 is part of the active site. Na(+)-binding residues include alanine 164, cysteine 167, and threonine 170.

Belongs to the peptidase T1B family. HslV subfamily. A double ring-shaped homohexamer of HslV is capped on each side by a ring-shaped HslU homohexamer. The assembly of the HslU/HslV complex is dependent on binding of ATP.

It is found in the cytoplasm. It catalyses the reaction ATP-dependent cleavage of peptide bonds with broad specificity.. Its activity is regulated as follows. Allosterically activated by HslU binding. Functionally, protease subunit of a proteasome-like degradation complex believed to be a general protein degrading machinery. The polypeptide is ATP-dependent protease subunit HslV (Hydrogenovibrio crunogenus (strain DSM 25203 / XCL-2) (Thiomicrospira crunogena)).